A 79-amino-acid chain; its full sequence is Acyl carrier protein (79 aa).

The Carrier domain maps to 2–77 (SDIEARVKKI…NAIDYANTHH (76 aa)). S37 carries the O-(pantetheine 4'-phosphoryl)serine modification.

It belongs to the acyl carrier protein (ACP) family. In terms of processing, 4'-phosphopantetheine is transferred from CoA to a specific serine of apo-ACP by AcpS. This modification is essential for activity because fatty acids are bound in thioester linkage to the sulfhydryl of the prosthetic group.

Its subcellular location is the cytoplasm. The protein operates within lipid metabolism; fatty acid biosynthesis. Its function is as follows. Carrier of the growing fatty acid chain in fatty acid biosynthesis. This is Acyl carrier protein from Polaromonas naphthalenivorans (strain CJ2).